Consider the following 203-residue polypeptide: Tail fiber assembly protein homolog (203 aa).

It belongs to the tfa family.

This is Tail fiber assembly protein homolog (T) from Escherichia coli.